A 713-amino-acid chain; its full sequence is Mitochondrial intermediate peptidase (713 aa).

Residues 1-35 (MLCVGRLGGLGARAAALPPRRAGRGSLEAGIRARR) constitute a mitochondrion transit peptide. Lysine 126 bears the N6-acetyllysine mark. Histidine 495 contacts Zn(2+). Glutamate 496 is an active-site residue. Residues histidine 499 and histidine 502 each contribute to the Zn(2+) site.

The protein belongs to the peptidase M3 family. As to quaternary structure, monomer. Requires Zn(2+) as cofactor.

It localises to the mitochondrion matrix. It catalyses the reaction Release of an N-terminal octapeptide as second stage of processing of some proteins imported into the mitochondrion.. With respect to regulation, activity is divalent cation-dependent. It is stimulated by manganese, magnesium or calcium ions and reversibly inhibited by zinc, cobalt and iron. Its function is as follows. Cleaves proteins, imported into the mitochondrion, to their mature size. This chain is Mitochondrial intermediate peptidase (MIPEP), found in Homo sapiens (Human).